The chain runs to 690 residues: Methionine--tRNA ligase (690 aa).

The short motif at 12–22 (PYANGPLHLGH) is the 'HIGH' region element. The Zn(2+) site is built by Cys-144, Cys-147, Cys-157, and Cys-160. The 'KMSKS' region motif lies at 333 to 337 (QFSKS). Lys-336 provides a ligand contact to ATP. A tRNA-binding domain is found at 535–632 (KKINIDLMVG…VNADDGSRMK (98 aa)).

It belongs to the class-I aminoacyl-tRNA synthetase family. MetG type 1 subfamily. In terms of assembly, homodimer. Requires Zn(2+) as cofactor.

It is found in the cytoplasm. It carries out the reaction tRNA(Met) + L-methionine + ATP = L-methionyl-tRNA(Met) + AMP + diphosphate. Functionally, is required not only for elongation of protein synthesis but also for the initiation of all mRNA translation through initiator tRNA(fMet) aminoacylation. The chain is Methionine--tRNA ligase from Picrophilus torridus (strain ATCC 700027 / DSM 9790 / JCM 10055 / NBRC 100828 / KAW 2/3).